The primary structure comprises 261 residues: MAAACRSVKGLVALITGGASGLGLATAERLVGQGATAVLLDLPNSDGETQAKKLGKSCAFAPADVTSEKDVQAALTLAREKFGRVDVAVNCAGIAVASKTYNLKKSQAHTLEDFQRVINVNLIGTFNVIRLVAGEMGQNEPDQGGQRGVIINTASVAAFEGQVGQAAYSASKGGIVGMTLPIARDLAPMGIRVMTIAPGLFGTPLLTTLPDKVRNFLASQVPFPSRLGDPAEYAHLVQAIIENSFLNGEVIRLDGAIRMQP.

An N-acetylalanine modification is found at A2. The NAD(+) site is built by S20, L22, and D41. At K53 the chain carries N6-acetyllysine; alternate. K53 is modified (N6-succinyllysine; alternate). D64 and V65 together coordinate NAD(+). Residue K69 is modified to N6-acetyllysine. C91 contributes to the NAD(+) binding site. N6-acetyllysine occurs at positions 99 and 105. S155 is a binding site for substrate. Positions 168, 172, 201, and 203 each coordinate NAD(+). Residue Y168 is the Proton acceptor of the active site. At K212 the chain carries N6-acetyllysine; alternate. An N6-succinyllysine; alternate modification is found at K212.

The protein belongs to the short-chain dehydrogenases/reductases (SDR) family. As to quaternary structure, homotetramer. Component of mitochondrial ribonuclease P, a complex composed of TRMT10C/MRPP1, HSD17B10/MRPP2 and PRORP/MRPP3. Interacts with TRMT10C/MRPP1; forming the MRPP1-MRPP2 subcomplex of the mitochondrial ribonuclease P complex.

Its subcellular location is the mitochondrion. The protein localises to the mitochondrion matrix. It is found in the mitochondrion nucleoid. It catalyses the reaction a (3S)-3-hydroxyacyl-CoA + NAD(+) = a 3-oxoacyl-CoA + NADH + H(+). It carries out the reaction (2S,3S)-3-hydroxy-2-methylbutanoyl-CoA + NAD(+) = 2-methyl-3-oxobutanoyl-CoA + NADH + H(+). The catalysed reaction is testosterone + NAD(+) = androst-4-ene-3,17-dione + NADH + H(+). The enzyme catalyses 5alpha-androstane-3alpha,17beta-diol + NAD(+) = 17beta-hydroxy-5alpha-androstan-3-one + NADH + H(+). It catalyses the reaction 17beta-estradiol + NAD(+) = estrone + NADH + H(+). It carries out the reaction cholate + NAD(+) = 3alpha,12alpha-dihydroxy-7-oxo-5beta-cholanate + NADH + H(+). The catalysed reaction is (3S)-3-hydroxybutanoyl-CoA + NAD(+) = acetoacetyl-CoA + NADH + H(+). The enzyme catalyses (3S)-hydroxyoctanoyl-CoA + NAD(+) = 3-oxooctanoyl-CoA + NADH + H(+). It catalyses the reaction (3S)-hydroxyhexadecanoyl-CoA + NAD(+) = 3-oxohexadecanoyl-CoA + NADH + H(+). It carries out the reaction 17beta-hydroxy-5alpha-androstan-3-one + NAD(+) = 5alpha-androstan-3,17-dione + NADH + H(+). The catalysed reaction is 5alpha-pregnan-20beta-ol-3-one + NAD(+) = 5alpha-pregnane-3,20-dione + NADH + H(+). The enzyme catalyses 3alpha-hydroxy-5alpha-pregnan-20-one + NAD(+) = 5alpha-pregnane-3,20-dione + NADH + H(+). It catalyses the reaction cortisone + NAD(+) = 17alpha-hydroxypregn-4-en-3,11,20-trione-21-al + NADH + H(+). It carries out the reaction 11-dehydrocorticosterone + NAD(+) = pregn-4-ene-3,11,20,21-tetraone + NADH + H(+). The catalysed reaction is cortisol + NAD(+) = 11beta,17alpha-dihydroxypregn-4-ene-3,20,21-trione + NADH + H(+). The enzyme catalyses chenodeoxycholate + NAD(+) = 7-oxolithocholate + NADH + H(+). It catalyses the reaction ursodeoxycholate + NAD(+) = 7-oxolithocholate + NADH + H(+). It carries out the reaction 3beta,7beta-dihydroxy-5beta-cholan-24-oate + NAD(+) = 3beta-hydroxy-7-oxo-5beta-cholan-24-oate + NADH + H(+). It participates in amino-acid degradation; L-isoleucine degradation. The protein operates within lipid metabolism; fatty acid beta-oxidation. It functions in the pathway steroid metabolism. Its pathway is lipid metabolism; bile acid biosynthesis. Functionally, mitochondrial dehydrogenase involved in pathways of fatty acid, branched-chain amino acid and steroid metabolism. Acts as (S)-3-hydroxyacyl-CoA dehydrogenase in mitochondrial fatty acid beta-oxidation, a major degradation pathway of fatty acids. Catalyzes the third step in the beta-oxidation cycle, namely the reversible conversion of (S)-3-hydroxyacyl-CoA to 3-ketoacyl-CoA. Preferentially accepts straight medium- and short-chain acyl-CoA substrates with highest efficiency for (3S)-hydroxybutanoyl-CoA. Acts as 3-hydroxy-2-methylbutyryl-CoA dehydrogenase in branched-chain amino acid catabolic pathway. Catalyzes the oxidation of 3-hydroxy-2-methylbutanoyl-CoA into 2-methyl-3-oxobutanoyl-CoA, a step in isoleucine degradation pathway. Has hydroxysteroid dehydrogenase activity toward steroid hormones and bile acids. Catalyzes the oxidation of 3alpha-, 17beta-, 20beta- and 21-hydroxysteroids and 7alpha- and 7beta-hydroxy bile acids. Oxidizes allopregnanolone/brexanolone at the 3alpha-hydroxyl group, which is known to be critical for the activation of gamma-aminobutyric acid receptors (GABAARs) chloride channel. Has phospholipase C-like activity toward cardiolipin and its oxidized species. Likely oxidizes the 2'-hydroxyl in the head group of cardiolipin to form a ketone intermediate that undergoes nucleophilic attack by water and fragments into diacylglycerol, dihydroxyacetone and orthophosphate. Has higher affinity for cardiolipin with oxidized fatty acids and may degrade these species during the oxidative stress response to protect cells from apoptosis. By interacting with intracellular amyloid-beta, it may contribute to the neuronal dysfunction associated with Alzheimer disease (AD). Essential for structural and functional integrity of mitochondria. In addition to mitochondrial dehydrogenase activity, moonlights as a component of mitochondrial ribonuclease P, a complex that cleaves tRNA molecules in their 5'-ends. Together with TRMT10C/MRPP1, forms a subcomplex of the mitochondrial ribonuclease P, named MRPP1-MRPP2 subcomplex, which displays functions that are independent of the ribonuclease P activity. The MRPP1-MRPP2 subcomplex catalyzes the formation of N(1)-methylguanine and N(1)-methyladenine at position 9 (m1G9 and m1A9, respectively) in tRNAs; HSD17B10/MRPP2 acting as a non-catalytic subunit. The MRPP1-MRPP2 subcomplex also acts as a tRNA maturation platform: following 5'-end cleavage by the mitochondrial ribonuclease P complex, the MRPP1-MRPP2 subcomplex enhances the efficiency of 3'-processing catalyzed by ELAC2, retains the tRNA product after ELAC2 processing and presents the nascent tRNA to the mitochondrial CCA tRNA nucleotidyltransferase TRNT1 enzyme. Associates with mitochondrial DNA complexes at the nucleoids to initiate RNA processing and ribosome assembly. This chain is 3-hydroxyacyl-CoA dehydrogenase type-2 (HSD17B10), found in Bos taurus (Bovine).